The following is a 579-amino-acid chain: 3-hydroxy-3-methylglutaryl-coenzyme A reductase (579 aa).

Positions 1–22 are disordered; that stretch reads MEVRGGVGQGSAARHPPAPEPS. A run of 2 helical transmembrane segments spans residues 36 to 56 and 80 to 100; these read LPIRHTNLIFSALFAASLAYL and AIFGLVASLIYLLSFFGIAFV. The linker stretch occupies residues 101 to 153; the sequence is QSIVSSGDDDEDFLVGSGSSGSAAAPSRQHAQAPAPCELLGSPAAAPEKMPED. The segment at 154 to 579 is catalytic; it reads DEEIVASVVA…EKTRQREVDV (426 aa). Catalysis depends on glutamate 247, which acts as the Charge relay system. Residue asparagine 311 is glycosylated (N-linked (GlcNAc...) asparagine). Active-site charge relay system residues include lysine 379 and aspartate 455. A helical membrane pass occupies residues 524–544; that stretch reads LLATVVAGGVLAGELSLLSAL. Histidine 553 acts as the Proton donor in catalysis. Residues 555–579 are disordered; it reads KYNRSSKDVSSTTATEKTRQREVDV. An N-linked (GlcNAc...) asparagine glycan is attached at asparagine 557. The span at 570 to 579 shows a compositional bias: basic and acidic residues; that stretch reads EKTRQREVDV.

This sequence belongs to the HMG-CoA reductase family.

It is found in the endoplasmic reticulum membrane. The catalysed reaction is (R)-mevalonate + 2 NADP(+) + CoA = (3S)-3-hydroxy-3-methylglutaryl-CoA + 2 NADPH + 2 H(+). The protein operates within metabolic intermediate biosynthesis; (R)-mevalonate biosynthesis; (R)-mevalonate from acetyl-CoA: step 3/3. Catalyzes the synthesis of mevalonate. The specific precursor of all isoprenoid compounds present in plants. This Zea mays (Maize) protein is 3-hydroxy-3-methylglutaryl-coenzyme A reductase (HMGR).